The chain runs to 152 residues: Large ribosomal subunit protein bL9 (152 aa).

Belongs to the bacterial ribosomal protein bL9 family.

Binds to the 23S rRNA. The polypeptide is Large ribosomal subunit protein bL9 (Prochlorococcus marinus (strain MIT 9313)).